The primary structure comprises 421 residues: Adenosylhomocysteinase (421 aa).

Substrate contacts are provided by aspartate 128 and glutamate 153. 154–156 (TTT) contributes to the NAD(+) binding site. The substrate site is built by lysine 183 and aspartate 187. NAD(+) contacts are provided by residues asparagine 188, 217-222 (GYGWCG), glutamate 240, 296-298 (AGH), and asparagine 343.

It belongs to the adenosylhomocysteinase family. NAD(+) is required as a cofactor.

The protein resides in the cytoplasm. It catalyses the reaction S-adenosyl-L-homocysteine + H2O = L-homocysteine + adenosine. Its pathway is amino-acid biosynthesis; L-homocysteine biosynthesis; L-homocysteine from S-adenosyl-L-homocysteine: step 1/1. Its function is as follows. May play a key role in the regulation of the intracellular concentration of adenosylhomocysteine. The protein is Adenosylhomocysteinase of Thermococcus kodakarensis (strain ATCC BAA-918 / JCM 12380 / KOD1) (Pyrococcus kodakaraensis (strain KOD1)).